We begin with the raw amino-acid sequence, 475 residues long: MSSPNIWSTGSSVYSTPVFSQKMTLWILLLLSLYPGLTRQKSDDDYEDYASNKTWVLTPKVPEGDVTVILNNLLEGYDNKLRPDIGVKPTLIHTDMYVNSIGPVNAINMEYTIDIFFGQTWYDRRLKFNSTIKVLRLNSNMVGKIWIPDTFFRNSKKADAHWITTPNRMLRIWNDGRVLYTLRLTIDAECQLQLHNFPMDEHSCPLEFSSYGYPREEIVYQWKRSSVEVSDTRSWRLYQFSFVGLRNTTEVVKTTSGDYVVMTVYFDLSRRMGYFTIQTYIPCTLIVVLSWVSFWINKDAVPARTSLGITTVLTMTTLSTIARKSLPKVSYVTAMDLFVSVCFIFVFSALVEYGTLHYFVSNRKPSKDKDKKKKNPLLRMFSFKAPTIDIRPRSATIQMNNATHLQERDEEYGYECLDGKDCASFFCCFEDCRTGAWRHGRIHIRIAKMDSYARIFFPTAFCLFNLVYWVSYLYL.

The signal sequence occupies residues 1–39; it reads MSSPNIWSTGSSVYSTPVFSQKMTLWILLLLSLYPGLTR. Residues 41-275 lie on the Extracellular side of the membrane; that stretch reads KSDDDYEDYA…FDLSRRMGYF (235 aa). Residues Asn52 and Asn129 are each glycosylated (N-linked (GlcNAc...) asparagine). Cys190 and Cys204 are oxidised to a cystine. A glycan (N-linked (GlcNAc...) asparagine) is linked at Asn247. A helical membrane pass occupies residues 276 to 296; the sequence is TIQTYIPCTLIVVLSWVSFWI. Over 297–302 the chain is Cytoplasmic; the sequence is NKDAVP. The helical transmembrane segment at 303-322 threads the bilayer; sequence ARTSLGITTVLTMTTLSTIA. The Extracellular portion of the chain corresponds to 323-334; the sequence is RKSLPKVSYVTA. A helical membrane pass occupies residues 335–359; that stretch reads MDLFVSVCFIFVFSALVEYGTLHYF. At 360–451 the chain is on the cytoplasmic side; the sequence is VSNRKPSKDK…IHIRIAKMDS (92 aa). Position 382 is a phosphoserine; by PKC (Ser382). A helical transmembrane segment spans residues 452-472; sequence YARIFFPTAFCLFNLVYWVSY. Topologically, residues 473–475 are extracellular; sequence LYL.

It belongs to the ligand-gated ion channel (TC 1.A.9) family. Gamma-aminobutyric acid receptor (TC 1.A.9.5) subfamily. GABRG2 sub-subfamily. In terms of assembly, heteropentamer, formed by a combination of alpha (GABRA1-6), beta (GABRB1-3), gamma (GABRG1-3), delta (GABRD), epsilon (GABRE), rho (GABRR1-3), pi (GABRP) and theta (GABRQ) chains, each subunit exhibiting distinct physiological and pharmacological properties. Interacts with GABARAP. Interacts with KIF21B. Identified in a complex of 720 kDa composed of LHFPL4, NLGN2, GABRA1, GABRB2, GABRG2 and GABRB3. Interacts with LHFPL4. Interacts with SHISA7; interaction leads to the regulation of GABA(A) receptor trafficking, channel deactivation kinetics and pharmacology. Palmitoylated by ZDHHC3/GODZ; required for the accumulation of GABA(A) receptors at the postsynaptic membrane of inhibitory GABAergic synapses. Post-translationally, glycosylated.

It localises to the postsynaptic cell membrane. The protein resides in the cell membrane. It is found in the cell projection. The protein localises to the dendrite. Its subcellular location is the cytoplasmic vesicle membrane. It carries out the reaction chloride(in) = chloride(out). Allosterically activated by benzodiazepines. Activated by pentobarbital. Inhibited by the antagonist bicuculline. Inhibited by zinc ions. Potentiated by histamine. Its function is as follows. Gamma subunit of the heteropentameric ligand-gated chloride channel gated by gamma-aminobutyric acid (GABA), a major inhibitory neurotransmitter in the brain. GABA-gated chloride channels, also named GABA(A) receptors (GABAAR), consist of five subunits arranged around a central pore and contain GABA active binding site(s) located at the alpha and beta subunit interface(s). When activated by GABA, GABAARs selectively allow the flow of chloride anions across the cell membrane down their electrochemical gradient. Gamma-2/GABRG2-containing GABAARs are found at both synaptic and extrasynaptic sites. Chloride influx into the postsynaptic neuron following GABAAR opening decreases the neuron ability to generate a new action potential, thereby reducing nerve transmission. GABAARs containing alpha-1 and beta-2 or -3 subunits exhibit synaptogenic activity; the gamma-2 subunit being necessary but not sufficient to induce rapid synaptic contacts formation. Extrasynaptic gamma-2-containing receptors contribute to the tonic GABAergic inhibition. GABAARs function also as histamine receptor where histamine binds at the interface of two neighboring beta subunits and potentiates GABA response in a gamma-2 subunit-controlled manner. This chain is Gamma-aminobutyric acid receptor subunit gamma-2 (GABRG2), found in Bos taurus (Bovine).